Consider the following 153-residue polypeptide: 6,7-dimethyl-8-ribityllumazine synthase (153 aa).

5-amino-6-(D-ribitylamino)uracil is bound by residues F21, 55-57, and 79-81; these read AFE and TVI. Residue 84 to 85 coordinates (2S)-2-hydroxy-3-oxobutyl phosphate; it reads AT. H87 serves as the catalytic Proton donor. F112 contributes to the 5-amino-6-(D-ribitylamino)uracil binding site. Position 126 (R126) interacts with (2S)-2-hydroxy-3-oxobutyl phosphate.

It belongs to the DMRL synthase family. In terms of assembly, forms an icosahedral capsid composed of 60 subunits, arranged as a dodecamer of pentamers.

It catalyses the reaction (2S)-2-hydroxy-3-oxobutyl phosphate + 5-amino-6-(D-ribitylamino)uracil = 6,7-dimethyl-8-(1-D-ribityl)lumazine + phosphate + 2 H2O + H(+). It participates in cofactor biosynthesis; riboflavin biosynthesis; riboflavin from 2-hydroxy-3-oxobutyl phosphate and 5-amino-6-(D-ribitylamino)uracil: step 1/2. Functionally, catalyzes the formation of 6,7-dimethyl-8-ribityllumazine by condensation of 5-amino-6-(D-ribitylamino)uracil with 3,4-dihydroxy-2-butanone 4-phosphate. This is the penultimate step in the biosynthesis of riboflavin. The polypeptide is 6,7-dimethyl-8-ribityllumazine synthase (Bacillus cereus (strain G9842)).